We begin with the raw amino-acid sequence, 342 residues long: Methionyl-tRNA formyltransferase (342 aa).

108–111 (SLLP) lines the (6S)-5,6,7,8-tetrahydrofolate pocket.

Belongs to the Fmt family.

The catalysed reaction is L-methionyl-tRNA(fMet) + (6R)-10-formyltetrahydrofolate = N-formyl-L-methionyl-tRNA(fMet) + (6S)-5,6,7,8-tetrahydrofolate + H(+). Its function is as follows. Attaches a formyl group to the free amino group of methionyl-tRNA(fMet). The formyl group appears to play a dual role in the initiator identity of N-formylmethionyl-tRNA by promoting its recognition by IF2 and preventing the misappropriation of this tRNA by the elongation apparatus. The sequence is that of Methionyl-tRNA formyltransferase from Prochlorococcus marinus (strain MIT 9303).